The sequence spans 126 residues: Protein ApaG (126 aa).

Positions 2–126 (SALDTSIRVE…FRLATPGLLH (125 aa)) constitute an ApaG domain.

The protein is Protein ApaG of Shewanella sp. (strain W3-18-1).